The sequence spans 103 residues: Large ribosomal subunit protein bL21 (103 aa).

It belongs to the bacterial ribosomal protein bL21 family. As to quaternary structure, part of the 50S ribosomal subunit. Contacts protein L20.

Its function is as follows. This protein binds to 23S rRNA in the presence of protein L20. The polypeptide is Large ribosomal subunit protein bL21 (Treponema denticola (strain ATCC 35405 / DSM 14222 / CIP 103919 / JCM 8153 / KCTC 15104)).